Here is a 530-residue protein sequence, read N- to C-terminus: UDP-N-acetylmuramoyl-L-alanyl-D-glutamate--2,6-diaminopimelate ligase (530 aa).

Residue Ser-21 participates in UDP-N-acetyl-alpha-D-muramoyl-L-alanyl-D-glutamate binding. Gly-99 to Ser-105 is an ATP binding site. UDP-N-acetyl-alpha-D-muramoyl-L-alanyl-D-glutamate-binding positions include Thr-145–Thr-146, Ser-172, Gln-178, and Arg-180. An N6-carboxylysine modification is found at Lys-212. Residues Phe-221–Leu-269 enclose the RPE1 insert domain. Residues Arg-422, Asp-446 to Arg-449, Gly-496, and Glu-500 each bind meso-2,6-diaminopimelate. The short motif at Asp-446 to Arg-449 is the Meso-diaminopimelate recognition motif element.

Belongs to the MurCDEF family. MurE subfamily. Requires Mg(2+) as cofactor. Carboxylation is probably crucial for Mg(2+) binding and, consequently, for the gamma-phosphate positioning of ATP.

Its subcellular location is the cytoplasm. The catalysed reaction is UDP-N-acetyl-alpha-D-muramoyl-L-alanyl-D-glutamate + meso-2,6-diaminopimelate + ATP = UDP-N-acetyl-alpha-D-muramoyl-L-alanyl-gamma-D-glutamyl-meso-2,6-diaminopimelate + ADP + phosphate + H(+). The protein operates within cell wall biogenesis; peptidoglycan biosynthesis. In terms of biological role, catalyzes the addition of meso-diaminopimelic acid to the nucleotide precursor UDP-N-acetylmuramoyl-L-alanyl-D-glutamate (UMAG) in the biosynthesis of bacterial cell-wall peptidoglycan. The polypeptide is UDP-N-acetylmuramoyl-L-alanyl-D-glutamate--2,6-diaminopimelate ligase (Rickettsia felis (strain ATCC VR-1525 / URRWXCal2) (Rickettsia azadi)).